The sequence spans 412 residues: Adenosine receptor A2a (412 aa).

Over 1–7 (MSTMGSW) the chain is Extracellular. Residues 8–32 (VYITVELAIAVLAILGNVLVCWAVW) traverse the membrane as a helical segment. Residues 33 to 42 (LNSNLQNVTN) lie on the Cytoplasmic side of the membrane. Residues 43–66 (YFVVSLAAADIAVGVLAIPFAITI) traverse the membrane as a helical segment. At 67–77 (STGFCAACHNC) the chain is on the extracellular side. Disulfide bonds link Cys-71–Cys-159, Cys-74–Cys-146, and Cys-77–Cys-166. The helical transmembrane segment at 78-100 (LFFACFVLVLTQSSIFSLLAIAI) threads the bilayer. Topologically, residues 101 to 120 (DRYIAIRIPLRYNGLVTGTR) are cytoplasmic. A helical transmembrane segment spans residues 121–143 (AKGIIAVCWVLSFAIGLTPMLGW). The Extracellular segment spans residues 144–173 (NNCSQPKEGRNYSQGCGEGQVACLFEDVVP). Asn-145 and Asn-154 each carry an N-linked (GlcNAc...) asparagine glycan. Glu-169 is a binding site for adenosine. Residues 174–198 (MNYMVYYNFFAFVLVPLLLMLGVYL) form a helical membrane-spanning segment. Residues 199 to 234 (RIFLAARRQLKQMESQPLPGERARSTLQKEVHAAKS) lie on the Cytoplasmic side of the membrane. The chain crosses the membrane as a helical span at residues 235–258 (LAIIVGLFALCWLPLHIINCFTFF). Asn-253 is a binding site for adenosine. A disulfide bridge connects residues Cys-259 and Cys-262. Over 259 to 266 (CPECSHAP) the chain is Extracellular. A helical membrane pass occupies residues 267–290 (LWLMYLTIVLSHTNSVVNPFIYAY). Adenosine-binding residues include Ser-277 and His-278. The Cytoplasmic segment spans residues 291–412 (RIREFRQTFR…PLAQDGAGVS (122 aa)). Residues 392–412 (GACPESPGLEGPLAQDGAGVS) are disordered.

This sequence belongs to the G-protein coupled receptor 1 family. In terms of assembly, interacts (via cytoplasmic C-terminal domain) with USP4; the interaction is direct. May interact with DRD4. Interacts with NECAB2. Interacts (via cytoplasmic C-terminal domain) with GAS2L2; interaction enhances receptor-mediated adenylyl cyclase activity. Post-translationally, ubiquitinated. Deubiquitinated by USP4; leading to stabilization and expression at the cell surface.

Its subcellular location is the cell membrane. Its function is as follows. Receptor for adenosine. The activity of this receptor is mediated by G proteins which activate adenylyl cyclase. This Canis lupus familiaris (Dog) protein is Adenosine receptor A2a (ADORA2A).